Reading from the N-terminus, the 237-residue chain is Uridylate kinase (237 aa).

Residue 11–14 (KLSG) participates in ATP binding. Gly53 is a UMP binding site. Positions 54 and 58 each coordinate ATP. UMP is bound by residues Asp73 and 134-141 (TGNPFFTT). Thr161, Tyr167, and Asp170 together coordinate ATP.

It belongs to the UMP kinase family. As to quaternary structure, homohexamer.

The protein localises to the cytoplasm. The catalysed reaction is UMP + ATP = UDP + ADP. It functions in the pathway pyrimidine metabolism; CTP biosynthesis via de novo pathway; UDP from UMP (UMPK route): step 1/1. Inhibited by UTP. Functionally, catalyzes the reversible phosphorylation of UMP to UDP. The protein is Uridylate kinase of Burkholderia ambifaria (strain ATCC BAA-244 / DSM 16087 / CCUG 44356 / LMG 19182 / AMMD) (Burkholderia cepacia (strain AMMD)).